A 336-amino-acid chain; its full sequence is Holliday junction branch migration complex subunit RuvB (336 aa).

The interval 4 to 184 (SDRLISSQSI…FGIVQRLEYY (181 aa)) is large ATPase domain (RuvB-L). ATP contacts are provided by residues I23, R24, G65, K68, T69, T70, 131 to 133 (EDY), R174, Y184, and R221. T69 provides a ligand contact to Mg(2+). A small ATPAse domain (RuvB-S) region spans residues 185 to 255 (SVDSLTQIVA…MAQQALEMLE (71 aa)). The interval 258 to 336 (QHGFDLMDRK…HFGFSAIEQE (79 aa)) is head domain (RuvB-H). R313 and R318 together coordinate DNA.

This sequence belongs to the RuvB family. In terms of assembly, homohexamer. Forms an RuvA(8)-RuvB(12)-Holliday junction (HJ) complex. HJ DNA is sandwiched between 2 RuvA tetramers; dsDNA enters through RuvA and exits via RuvB. An RuvB hexamer assembles on each DNA strand where it exits the tetramer. Each RuvB hexamer is contacted by two RuvA subunits (via domain III) on 2 adjacent RuvB subunits; this complex drives branch migration. In the full resolvosome a probable DNA-RuvA(4)-RuvB(12)-RuvC(2) complex forms which resolves the HJ.

Its subcellular location is the cytoplasm. The enzyme catalyses ATP + H2O = ADP + phosphate + H(+). The RuvA-RuvB-RuvC complex processes Holliday junction (HJ) DNA during genetic recombination and DNA repair, while the RuvA-RuvB complex plays an important role in the rescue of blocked DNA replication forks via replication fork reversal (RFR). RuvA specifically binds to HJ cruciform DNA, conferring on it an open structure. The RuvB hexamer acts as an ATP-dependent pump, pulling dsDNA into and through the RuvAB complex. RuvB forms 2 homohexamers on either side of HJ DNA bound by 1 or 2 RuvA tetramers; 4 subunits per hexamer contact DNA at a time. Coordinated motions by a converter formed by DNA-disengaged RuvB subunits stimulates ATP hydrolysis and nucleotide exchange. Immobilization of the converter enables RuvB to convert the ATP-contained energy into a lever motion, pulling 2 nucleotides of DNA out of the RuvA tetramer per ATP hydrolyzed, thus driving DNA branch migration. The RuvB motors rotate together with the DNA substrate, which together with the progressing nucleotide cycle form the mechanistic basis for DNA recombination by continuous HJ branch migration. Branch migration allows RuvC to scan DNA until it finds its consensus sequence, where it cleaves and resolves cruciform DNA. This chain is Holliday junction branch migration complex subunit RuvB, found in Legionella pneumophila subsp. pneumophila (strain Philadelphia 1 / ATCC 33152 / DSM 7513).